A 122-amino-acid polypeptide reads, in one-letter code: MARLAGVDLPREKRMEVALTYIFGIGPARSKELLEKTGISPDLRSKDLSDEQLAALRDVIENNWKVEGDLRREIQADIRRKIEIGSYQGLRHRRGLPVRGQRTKTNARTRKGPKKTIAGKKK.

Positions 93 to 122 (RRGLPVRGQRTKTNARTRKGPKKTIAGKKK) are disordered.

This sequence belongs to the universal ribosomal protein uS13 family. Part of the 30S ribosomal subunit. Forms a loose heterodimer with protein S19. Forms two bridges to the 50S subunit in the 70S ribosome.

Functionally, located at the top of the head of the 30S subunit, it contacts several helices of the 16S rRNA. In the 70S ribosome it contacts the 23S rRNA (bridge B1a) and protein L5 of the 50S subunit (bridge B1b), connecting the 2 subunits; these bridges are implicated in subunit movement. Contacts the tRNAs in the A and P-sites. The protein is Small ribosomal subunit protein uS13 of Corynebacterium urealyticum (strain ATCC 43042 / DSM 7109).